A 749-amino-acid polypeptide reads, in one-letter code: Cytosolic phospholipase A2 (749 aa).

The tract at residues Met1–Ser178 is phospholipid binding. The residue at position 2 (Ser2) is a Phosphoserine. Residues Pro6–Phe122 enclose the C2 domain. Residues Asp40, Thr41, Asp43, Asn65, Asp93, Ala94, and Asn95 each coordinate Ca(2+). In terms of domain architecture, PLA2c spans Ser140 to Asn740. Residue Ser228 is the Nucleophile of the active site. The residue at position 268 (Thr268) is a Phosphothreonine. The interval Gly409–Gln457 is disordered. Residues Ser434, Ser435, and Ser437 each carry the phosphoserine modification. Phosphoserine; by MAPK is present on Ser505. Ser515 carries the post-translational modification Phosphoserine. Lys541 is covalently cross-linked (Glycyl lysine isopeptide (Lys-Gly) (interchain with G-Cter in SUMO2)). The Proton acceptor role is filled by Asp549. A Glycyl lysine isopeptide (Lys-Gly) (interchain with G-Cter in SUMO2) cross-link involves residue Lys606. 2 positions are modified to phosphoserine: Ser727 and Ser729.

Interacts with KAT5. Phosphorylated at both Ser-505 and Ser-727 in response to mitogenic stimuli.

Its subcellular location is the cytoplasm. It localises to the golgi apparatus membrane. The protein resides in the nucleus envelope. It carries out the reaction a 1,2-diacyl-sn-glycero-3-phosphocholine + H2O = a 1-acyl-sn-glycero-3-phosphocholine + a fatty acid + H(+). The catalysed reaction is a 1-O-alkyl-2-acyl-sn-glycero-3-phosphocholine + H2O = a 1-O-alkyl-sn-glycero-3-phosphocholine + a fatty acid + H(+). The enzyme catalyses a 1-acyl-sn-glycero-3-phosphocholine + H2O = sn-glycerol 3-phosphocholine + a fatty acid + H(+). It catalyses the reaction 1-hexadecanoyl-2-(5Z,8Z,11Z,14Z-eicosatetraenoyl)-sn-glycero-3-phosphocholine + H2O = 1-hexadecanoyl-sn-glycero-3-phosphocholine + (5Z,8Z,11Z,14Z)-eicosatetraenoate + H(+). It carries out the reaction 1,2-di-(5Z,8Z,11Z,14Z-eicosatetraenoyl)-sn-glycero-3-phosphocholine + H2O = 1-(5Z,8Z,11Z,14Z-eicosatetraenoyl)-sn-glycero-3-phosphocholine + (5Z,8Z,11Z,14Z)-eicosatetraenoate + H(+). The catalysed reaction is 1-octadecanoyl-2-(5Z,8Z,11Z,14Z-eicosatetraenoyl)-sn-glycero-3-phosphocholine + H2O = 1-octadecanoyl-sn-glycero-3-phosphocholine + (5Z,8Z,11Z,14Z)-eicosatetraenoate + H(+). The enzyme catalyses 1-hexadecanoyl-2-(9Z,12Z-octadecadienoyl)-sn-glycero-3-phosphocholine + H2O = (9Z,12Z)-octadecadienoate + 1-hexadecanoyl-sn-glycero-3-phosphocholine + H(+). It catalyses the reaction 1-octadecanoyl-2-(9Z,12Z,15Z-octadecatrienoyl)-sn-glycero-3-phosphocholine + H2O = (9Z,12Z,15Z)-octadecatrienoate + 1-octadecanoyl-sn-glycero-3-phosphocholine + H(+). It carries out the reaction 1-(5Z,8Z,11Z,14Z-eicosatetraenoyl)-2-hexadecanoyl-sn-glycero-3-phosphocholine + H2O = 1-(5Z,8Z,11Z,14Z-eicosatetraenoyl)-sn-glycero-3-phosphocholine + hexadecanoate + H(+). The catalysed reaction is 1-O-hexadecyl-2-(5Z,8Z,11Z,14Z)-eicosatetraenoyl-sn-glycero-3-phosphocholine + H2O = 1-O-hexadecyl-sn-glycero-3-phosphocholine + (5Z,8Z,11Z,14Z)-eicosatetraenoate + H(+). The enzyme catalyses 1,2-di-(9Z-octadecenoyl)-sn-glycero-3-phospho-(1'-sn-glycerol) + H2O = 1-(9Z-octadecenoyl)-sn-glycero-3-phospho-(1'-sn-glycerol) + (9Z)-octadecenoate + H(+). It catalyses the reaction 1-octadecanoyl-2-(5Z,8Z,11Z,14Z-eicosatetraenoyl)-sn-glycero-3-phosphate + H2O = 1-octadecanoyl-sn-glycero-3-phosphate + (5Z,8Z,11Z,14Z)-eicosatetraenoate + H(+). It carries out the reaction 1-hexadecanoyl-sn-glycero-3-phosphocholine + H2O = sn-glycerol 3-phosphocholine + hexadecanoate + H(+). The catalysed reaction is 2-(prostaglandin E2)-sn-glycero-3-phosphoethanolamine + H2O = sn-glycero-3-phosphoethanolamine + prostaglandin E2 + H(+). The enzyme catalyses 2-[(15S)-hydroxy-(5Z,8Z,11Z,13E)-eicosatetraenoyl]-sn-glycero-3-phosphocholine + H2O = (15S)-hydroxy-(5Z,8Z,11Z,13E)-eicosatetraenoate + sn-glycerol 3-phosphocholine + H(+). It catalyses the reaction 2-[(15R)-hydroxy-(5Z,8Z,11Z,13E)-eicosatetraenoyl]-sn-glycero-3-phosphocholine + H2O = (15R)-hydroxy-(5Z,8Z,11Z,13E)-eicosatetraenoate + sn-glycerol 3-phosphocholine + H(+). It carries out the reaction 2-(prostaglandin E2)-sn-glycero-3-phosphocholine + H2O = prostaglandin E2 + sn-glycerol 3-phosphocholine + H(+). The catalysed reaction is 2-[(11R)-hydroxy-(5Z,8Z,12E,14Z)-eicosatetraenoyl]-sn-glycero-3-phosphocholine + H2O = (11R)-hydroxy-(5Z,8Z,12E,14Z)-eicosatetraenoate + sn-glycerol 3-phosphocholine + H(+). The enzyme catalyses 1-(5Z,8Z,11Z,14Z-eicosatetraenoyl)-2-O-hexadecyl-sn-glycero-3-phosphocholine + H2O = 2-O-hexadecyl-sn-glycero-3-phosphocholine + (5Z,8Z,11Z,14Z)-eicosatetraenoate + H(+). It catalyses the reaction 1-octadecanoyl-2-(5Z,8Z,11Z,14Z-eicosatetraenoyl)-sn-glycero-3-phosphocholine + glycerol = 1-(5Z,8Z,11Z,14Z-eicosatetraenoyl)-glycerol + 1-octadecanoyl-sn-glycero-3-phosphocholine. It carries out the reaction 1-octadecanoyl-2-(9Z,12Z,15Z-octadecatrienoyl)-sn-glycero-3-phosphocholine + glycerol = 1-(9Z,12Z,15Z-octadecatrienoyl)-glycerol + 1-octadecanoyl-sn-glycero-3-phosphocholine. Its pathway is membrane lipid metabolism; glycerophospholipid metabolism. It participates in lipid metabolism; arachidonate metabolism. The protein operates within lipid metabolism; prostaglandin biosynthesis. It functions in the pathway lipid metabolism; leukotriene B4 biosynthesis. Activated by cytosolic calcium, which is necessary for binding to membrane lipids. Activated by phosphorylation in response to mitogenic stimuli. Functionally, has primarily calcium-dependent phospholipase and lysophospholipase activities, with a major role in membrane lipid remodeling and biosynthesis of lipid mediators of the inflammatory response. Plays an important role in embryo implantation and parturition through its ability to trigger prostanoid production. Preferentially hydrolyzes the ester bond of the fatty acyl group attached at sn-2 position of phospholipids (phospholipase A2 activity). Selectively hydrolyzes sn-2 arachidonoyl group from membrane phospholipids, providing the precursor for eicosanoid biosynthesis via the cyclooxygenase pathway. In an alternative pathway of eicosanoid biosynthesis, hydrolyzes sn-2 fatty acyl chain of eicosanoid lysophopholipids to release free bioactive eicosanoids. Hydrolyzes the ester bond of the fatty acyl group attached at sn-1 position of phospholipids (phospholipase A1 activity) only if an ether linkage rather than an ester linkage is present at the sn-2 position. This hydrolysis is not stereospecific. Has calcium-independent phospholipase A2 and lysophospholipase activities in the presence of phosphoinositides. Has O-acyltransferase activity. Catalyzes the transfer of fatty acyl chains from phospholipids to a primary hydroxyl group of glycerol (sn-1 or sn-3), potentially contributing to monoacylglycerol synthesis. The sequence is that of Cytosolic phospholipase A2 (PLA2G4A) from Pongo abelii (Sumatran orangutan).